The sequence spans 63 residues: Cysteine-rich venom protein 3 (63 aa).

Residues 1–25 (MRKPITLILVVALALVLLATSEVSA) form the signal peptide. 3 disulfide bridges follow: Cys29-Cys43, Cys36-Cys48, and Cys42-Cys58.

As to expression, expressed by the venom gland.

It localises to the secreted. The protein is Cysteine-rich venom protein 3 of Pimpla hypochondriaca (Parasitoid wasp).